Consider the following 273-residue polypeptide: Diaminopimelate epimerase (273 aa).

Residues Asn-11 and Asn-60 each contribute to the substrate site. Residue Cys-69 is the Proton donor of the active site. Substrate is bound by residues 70-71 (GN), Asn-181, and 199-200 (ER). The active-site Proton acceptor is Cys-209. 210–211 (GT) is a binding site for substrate.

The protein belongs to the diaminopimelate epimerase family. In terms of assembly, homodimer.

The protein resides in the cytoplasm. The enzyme catalyses (2S,6S)-2,6-diaminopimelate = meso-2,6-diaminopimelate. It functions in the pathway amino-acid biosynthesis; L-lysine biosynthesis via DAP pathway; DL-2,6-diaminopimelate from LL-2,6-diaminopimelate: step 1/1. In terms of biological role, catalyzes the stereoinversion of LL-2,6-diaminopimelate (L,L-DAP) to meso-diaminopimelate (meso-DAP), a precursor of L-lysine and an essential component of the bacterial peptidoglycan. This is Diaminopimelate epimerase from Helicobacter pylori (strain ATCC 700392 / 26695) (Campylobacter pylori).